Here is a 178-residue protein sequence, read N- to C-terminus: Arginine repressor (178 aa).

Positions 1-20 are disordered; the sequence is MTEAQEPEYGGPSVPQTRTA.

It belongs to the ArgR family.

The protein localises to the cytoplasm. It participates in amino-acid biosynthesis; L-arginine biosynthesis [regulation]. Its function is as follows. Regulates arginine biosynthesis genes. The chain is Arginine repressor from Streptomyces griseus subsp. griseus (strain JCM 4626 / CBS 651.72 / NBRC 13350 / KCC S-0626 / ISP 5235).